The primary structure comprises 483 residues: Serralysin (483 aa).

Histidine 184 is a Zn(2+) binding site. The active site involves glutamate 185. The Zn(2+) site is built by histidine 188 and histidine 194. Ca(2+) contacts are provided by arginine 263, aspartate 266, aspartate 295, glycine 297, glycine 298, aspartate 300, threonine 337, and glutamate 339. Hemolysin-type calcium-binding repeat units lie at residues 342-359 (IGGSGNDILIGNDAENIL) and 360-377 (KGGAGDDIIYGGLGADQL).

The protein belongs to the peptidase M10B family. Requires Zn(2+) as cofactor. Ca(2+) is required as a cofactor.

The protein resides in the secreted. It catalyses the reaction Preferential cleavage of bonds with hydrophobic residues in P1'.. With respect to regulation, inhibited by 8 mM 1,10-phenanthroline and 10 mM EDTA, but not by PMSF. In terms of biological role, involved in the inhibition of insect antibacterial peptides. Reduces the antibacterial activity of G.mellonella hemolymph by 50%. Reduces the antibacterial activity of cecropin A by 80% and cecropin B by 75%. This chain is Serralysin, found in Photorhabdus sp. (strain Az29).